The following is a 681-amino-acid chain: DNA ligase (681 aa).

Residues 45–49 (DFDFD), 94–95 (SL), and glutamate 120 each bind NAD(+). Lysine 122 (N6-AMP-lysine intermediate) is an active-site residue. Residues arginine 143, glutamate 177, lysine 289, and lysine 313 each contribute to the NAD(+) site. Cysteine 403, cysteine 406, cysteine 421, and cysteine 426 together coordinate Zn(2+). The 89-residue stretch at 593–681 (SDQQPFAGQS…SLKINFKNTI (89 aa)) folds into the BRCT domain.

The protein belongs to the NAD-dependent DNA ligase family. LigA subfamily. It depends on Mg(2+) as a cofactor. Requires Mn(2+) as cofactor.

It catalyses the reaction NAD(+) + (deoxyribonucleotide)n-3'-hydroxyl + 5'-phospho-(deoxyribonucleotide)m = (deoxyribonucleotide)n+m + AMP + beta-nicotinamide D-nucleotide.. Functionally, DNA ligase that catalyzes the formation of phosphodiester linkages between 5'-phosphoryl and 3'-hydroxyl groups in double-stranded DNA using NAD as a coenzyme and as the energy source for the reaction. It is essential for DNA replication and repair of damaged DNA. The chain is DNA ligase from Leptospira borgpetersenii serovar Hardjo-bovis (strain L550).